The following is a 497-amino-acid chain: Aspartyl/glutamyl-tRNA(Asn/Gln) amidotransferase subunit B (497 aa).

It belongs to the GatB/GatE family. GatB subfamily. In terms of assembly, heterotrimer of A, B and C subunits.

The enzyme catalyses L-glutamyl-tRNA(Gln) + L-glutamine + ATP + H2O = L-glutaminyl-tRNA(Gln) + L-glutamate + ADP + phosphate + H(+). The catalysed reaction is L-aspartyl-tRNA(Asn) + L-glutamine + ATP + H2O = L-asparaginyl-tRNA(Asn) + L-glutamate + ADP + phosphate + 2 H(+). Its function is as follows. Allows the formation of correctly charged Asn-tRNA(Asn) or Gln-tRNA(Gln) through the transamidation of misacylated Asp-tRNA(Asn) or Glu-tRNA(Gln) in organisms which lack either or both of asparaginyl-tRNA or glutaminyl-tRNA synthetases. The reaction takes place in the presence of glutamine and ATP through an activated phospho-Asp-tRNA(Asn) or phospho-Glu-tRNA(Gln). This Rhodopirellula baltica (strain DSM 10527 / NCIMB 13988 / SH1) protein is Aspartyl/glutamyl-tRNA(Asn/Gln) amidotransferase subunit B.